Consider the following 151-residue polypeptide: MPLNQDFVGRSYTSDVPFQVGREHIRQFARAIGDGNPLFRDVEAAKAAGHADLVAPPTFLVTAIPGDLGLPTNDPALGLDYSLVVHGDQRFTLHRPVVAGDELVVRSTLASIRSVGRNEVLVTSYEFTTTSGELVAEGTCSLVSRGTAPPR.

Residues 8 to 127 (VGRSYTSDVP…NEVLVTSYEF (120 aa)) form the MaoC-like domain.

The protein belongs to the UPF0336 family.

The protein is UPF0336 protein Franean1_6066 of Parafrankia sp. (strain EAN1pec).